A 347-amino-acid polypeptide reads, in one-letter code: NADH-ubiquinone oxidoreductase chain 2 (347 aa).

The next 10 helical transmembrane spans lie at 3–23 (PIVF…VMMS), 25–45 (HWLM…PILM), 59–79 (YFLT…INLM), 111–131 (FHFW…LILL), 149–169 (INLD…GWGG), 178–198 (IMAY…TYNP), 201–221 (TMLN…LLML), 242–262 (SLIL…GFIP), 274–294 (NSII…YFYL), and 325–345 (LLPT…TMSI).

It belongs to the complex I subunit 2 family. Core subunit of respiratory chain NADH dehydrogenase (Complex I) which is composed of 45 different subunits. Interacts with TMEM242.

It localises to the mitochondrion inner membrane. The enzyme catalyses a ubiquinone + NADH + 5 H(+)(in) = a ubiquinol + NAD(+) + 4 H(+)(out). In terms of biological role, core subunit of the mitochondrial membrane respiratory chain NADH dehydrogenase (Complex I) which catalyzes electron transfer from NADH through the respiratory chain, using ubiquinone as an electron acceptor. Essential for the catalytic activity and assembly of complex I. The polypeptide is NADH-ubiquinone oxidoreductase chain 2 (Rhinoceros unicornis (Greater Indian rhinoceros)).